Here is a 309-residue protein sequence, read N- to C-terminus: Hydroxyacylglutathione hydrolase, mitochondrial (309 aa).

The N-terminal 24 residues, 1-24 (MVLGRGSLCLRSLSVLGAACARRG), are a transit peptide targeting the mitochondrion. An N6-acetyllysine modification is found at Lys90. The Zn(2+) site is built by His103, His105, Asp107, and His108. Lys117 bears the N6-acetyllysine mark. His159 and Asp183 together coordinate Zn(2+). Residues 192–194 (KFY) and 222–224 (HEY) each bind substrate. Position 222 (His222) interacts with Zn(2+). Lys230 is subject to N6-acetyllysine; alternate. Lys230 is subject to N6-succinyllysine; alternate. Residue 298-301 (RREK) coordinates substrate.

Belongs to the metallo-beta-lactamase superfamily. Glyoxalase II family. As to quaternary structure, monomer. Zn(2+) is required as a cofactor. As to expression, strongly expressed in testis, skeletal muscle and heart. Weakly expressed in placenta, pancreas, spleen and peripheral blood leukocytes.

It localises to the mitochondrion matrix. The protein resides in the cytoplasm. It catalyses the reaction an S-(2-hydroxyacyl)glutathione + H2O = a 2-hydroxy carboxylate + glutathione + H(+). The enzyme catalyses (R)-S-lactoylglutathione + H2O = (R)-lactate + glutathione + H(+). It functions in the pathway secondary metabolite metabolism; methylglyoxal degradation; (R)-lactate from methylglyoxal: step 2/2. Its function is as follows. Thiolesterase that catalyzes the hydrolysis of S-D-lactoyl-glutathione to form glutathione and D-lactic acid. In Rattus norvegicus (Rat), this protein is Hydroxyacylglutathione hydrolase, mitochondrial (Hagh).